Consider the following 261-residue polypeptide: N-acetyltransferase ECO1 (261 aa).

A CCHH-type zinc finger spans residues 29 to 53 (LKCPKCEMKYSPNSIDDVATHKKYH). The 160-residue stretch at 102–261 (VMIQENKPAE…SGHILIPCYL (160 aa)) folds into the N-acetyltransferase domain.

It belongs to the acetyltransferase family. ECO subfamily.

It is found in the nucleus. Probable acetyltransferase required for the establishment of sister chromatid cohesion and couple the processes of cohesion and DNA replication to ensure that only sister chromatids become paired together. In contrast to the structural cohesins, the deposition and establishment factors are required only during S phase. Acts by acetylating the cohesin complex component SMC3. The sequence is that of N-acetyltransferase ECO1 (ECO1) from Candida glabrata (strain ATCC 2001 / BCRC 20586 / JCM 3761 / NBRC 0622 / NRRL Y-65 / CBS 138) (Yeast).